Reading from the N-terminus, the 932-residue chain is Myelin gene regulatory factor-like A (932 aa).

Low complexity-rich tracts occupy residues 1-19 (MDGY…QQHQ) and 33-48 (QQQQ…QQQQ). 7 disordered regions span residues 1–63 (MDGY…ISNG), 152–256 (VNSP…LSSS), 269–328 (TNTQ…NENP), 540–568 (VTPP…SNNM), 582–601 (TMNI…LSQL), 613–660 (TQNH…NNNN), and 680–726 (NINN…CHWN). The segment covering 49 to 59 (PMNGSNNQLLG) has biased composition (polar residues). Positions 127–154 (LDSSFLMLQQQLQDQQQQIAQFNSSVNS) form a coiled coil. Composition is skewed to low complexity over residues 152-249 (VNSP…ANNT) and 277-294 (PRSI…TNSP). Positions 286-546 (PNLSPTNSPI…ATQVTPPGDL (261 aa)) form a DNA-binding region, NDT80. Residues 311 to 328 (ENENSDPPSPMTQYNENP) show a composition bias toward polar residues. 2 stretches are compositionally biased toward low complexity: residues 615–660 (NHNN…NNNN) and 680–721 (NINN…NNNN). Residues 767–877 (SDLRIKYDLK…KQMDEMKLKL (111 aa)) form the Peptidase S74 domain. Residues 863 to 895 (TQELSKQMDEMKLKLITYESKLKNLKKKSKNQT) are a coiled coil. A helical transmembrane segment spans residues 895–915 (TILLIIFMITFLLVALYMYKP).

It localises to the membrane. Its function is as follows. Transcription factor which acts as a key regulator of pstA (prestalk-A) cells differentiation. Essential for ecmA-specific gene expression. This chain is Myelin gene regulatory factor-like A (mrfA), found in Dictyostelium discoideum (Social amoeba).